Consider the following 130-residue polypeptide: Fluoride-specific ion channel FluC (130 aa).

The next 4 membrane-spanning stretches (helical) occupy residues 3–23, 39–59, 67–87, and 102–122; these read FVFL…YFVG, GTFS…HLAV, FGIF…SYGL, and VSYA…GWFL. 2 residues coordinate Na(+): Gly-77 and Thr-80.

The protein belongs to the fluoride channel Fluc/FEX (TC 1.A.43) family.

It is found in the cell inner membrane. It carries out the reaction fluoride(in) = fluoride(out). Na(+) is not transported, but it plays an essential structural role and its presence is essential for fluoride channel function. Its function is as follows. Fluoride-specific ion channel. Important for reducing fluoride concentration in the cell, thus reducing its toxicity. This is Fluoride-specific ion channel FluC from Helicobacter pylori (strain ATCC 700392 / 26695) (Campylobacter pylori).